A 184-amino-acid chain; its full sequence is Large ribosomal subunit protein uL6 (184 aa).

It belongs to the universal ribosomal protein uL6 family. As to quaternary structure, part of the 50S ribosomal subunit.

Functionally, this protein binds to the 23S rRNA, and is important in its secondary structure. It is located near the subunit interface in the base of the L7/L12 stalk, and near the tRNA binding site of the peptidyltransferase center. This Thermosipho africanus (strain TCF52B) protein is Large ribosomal subunit protein uL6.